The sequence spans 62 residues: Amolopin-P2 (62 aa).

The first 22 residues, 1–22 (MFTLKKSLLLLFFLGTISLSLC), serve as a signal peptide directing secretion. A propeptide spanning residues 23-44 (EQERGADEEENGGEVTEQEVKR) is cleaved from the precursor.

It belongs to the frog skin active peptide (FSAP) family. Amolopin subfamily. As to expression, expressed by the skin glands.

The protein resides in the secreted. Antimicrobial peptide with activity against Gram-positive bacteria. Has been tested against S.aureus (MIC=37.5 ug/mL), against B.pumilus (MIC=75.0 ug/mL), B.cereus (no activity detected). Does not show activity against Gram-negative bacteria (E.coli, B.dysenteriae, A.calcoaceticus, P.aeruginosa) and fungi (C.albicans). Does not show hemolytic activity against rabbit erythrocytes. This chain is Amolopin-P2, found in Amolops loloensis (Lolokou Sucker Frog).